The sequence spans 75 residues: uncharacterized protein (75 aa).

This is an uncharacterized protein from Acidithiobacillus ferridurans.